Here is a 120-residue protein sequence, read N- to C-terminus: NADH dehydrogenase [ubiquinone] 1 subunit C2 (120 aa).

A helical transmembrane segment spans residues 57 to 76; it reads GLHRQLLFVTSFVFAGYFYL.

The protein belongs to the complex I NDUFC2 subunit family. As to quaternary structure, complex I is composed of 45 different subunits. Interacts with TMEM242.

The protein localises to the mitochondrion inner membrane. In terms of biological role, accessory subunit of the mitochondrial membrane respiratory chain NADH dehydrogenase (Complex I), that is believed not to be involved in catalysis but required for the complex assembly. Complex I functions in the transfer of electrons from NADH to the respiratory chain. The immediate electron acceptor for the enzyme is believed to be ubiquinone. This Mus musculus (Mouse) protein is NADH dehydrogenase [ubiquinone] 1 subunit C2.